The primary structure comprises 596 residues: Putative terpene synthase 3, chloroplastic (596 aa).

The transit peptide at 1–46 (MATLSMQVSTLSKQVKNLNTFGMGSASKLPMVARRVSTIRLRPICS) directs the protein to the chloroplast. Residues Asp349 and Asp353 each coordinate Mn(2+). The DDXXD motif motif lies at 349-353 (DDVYD). Homodimerization regions lie at residues 355–361 (YGTLDEL) and 427–464 (EAKW…FTLP). The Mn(2+) site is built by Asp493 and Glu501.

The protein belongs to the terpene synthase family. In terms of assembly, homodimer. Mn(2+) serves as cofactor. Requires Mg(2+) as cofactor.

The protein resides in the plastid. Its subcellular location is the chloroplast. The protein operates within secondary metabolite biosynthesis; terpenoid biosynthesis. Its function is as follows. Putative monoterpene synthase. The protein is Putative terpene synthase 3, chloroplastic of Thymus vulgaris (Thyme).